A 132-amino-acid polypeptide reads, in one-letter code: Small ribosomal subunit protein uS8 (132 aa).

It belongs to the universal ribosomal protein uS8 family. Part of the 30S ribosomal subunit. Contacts proteins S5 and S12.

Its function is as follows. One of the primary rRNA binding proteins, it binds directly to 16S rRNA central domain where it helps coordinate assembly of the platform of the 30S subunit. This Mycobacterium marinum (strain ATCC BAA-535 / M) protein is Small ribosomal subunit protein uS8.